Reading from the N-terminus, the 430-residue chain is tRNA(Ile)-lysidine synthase (430 aa).

Residue 21 to 26 (SGGLDS) participates in ATP binding.

This sequence belongs to the tRNA(Ile)-lysidine synthase family.

The protein resides in the cytoplasm. It carries out the reaction cytidine(34) in tRNA(Ile2) + L-lysine + ATP = lysidine(34) in tRNA(Ile2) + AMP + diphosphate + H(+). Its function is as follows. Ligates lysine onto the cytidine present at position 34 of the AUA codon-specific tRNA(Ile) that contains the anticodon CAU, in an ATP-dependent manner. Cytidine is converted to lysidine, thus changing the amino acid specificity of the tRNA from methionine to isoleucine. The sequence is that of tRNA(Ile)-lysidine synthase from Salmonella agona (strain SL483).